The primary structure comprises 199 residues: NAD(P)H-quinone oxidoreductase subunit 6, chloroplastic (199 aa).

The next 5 membrane-spanning stretches (helical) occupy residues 13-33, 35-55, 64-84, 96-118, and 157-177; these read AILL…VLFT, IVYS…LYIL, VQIL…VMLI, WTVG…IAAI, and LPFE…ITMA.

It belongs to the complex I subunit 6 family. NDH is composed of at least 16 different subunits, 5 of which are encoded in the nucleus.

It is found in the plastid. Its subcellular location is the chloroplast thylakoid membrane. It carries out the reaction a plastoquinone + NADH + (n+1) H(+)(in) = a plastoquinol + NAD(+) + n H(+)(out). It catalyses the reaction a plastoquinone + NADPH + (n+1) H(+)(in) = a plastoquinol + NADP(+) + n H(+)(out). In terms of biological role, NDH shuttles electrons from NAD(P)H:plastoquinone, via FMN and iron-sulfur (Fe-S) centers, to quinones in the photosynthetic chain and possibly in a chloroplast respiratory chain. The immediate electron acceptor for the enzyme in this species is believed to be plastoquinone. Couples the redox reaction to proton translocation, and thus conserves the redox energy in a proton gradient. The polypeptide is NAD(P)H-quinone oxidoreductase subunit 6, chloroplastic (ndhG) (Huperzia lucidula (Shining clubmoss)).